The following is a 156-amino-acid chain: Arginine repressor (156 aa).

It belongs to the ArgR family.

Its subcellular location is the cytoplasm. It functions in the pathway amino-acid biosynthesis; L-arginine biosynthesis [regulation]. Functionally, regulates arginine biosynthesis genes. This is Arginine repressor from Shewanella woodyi (strain ATCC 51908 / MS32).